Here is a 1412-residue protein sequence, read N- to C-terminus: DNA-directed RNA polymerase subunit beta' (1412 aa).

4 residues coordinate Zn(2+): C70, C72, C85, and C88. Residues D460, D462, and D464 each contribute to the Mg(2+) site. Zn(2+) is bound by residues C819, C893, C900, and C903. Residues 1391–1412 (AEESFEFGTPETPAAEQQHSGE) form a disordered region.

The protein belongs to the RNA polymerase beta' chain family. The RNAP catalytic core consists of 2 alpha, 1 beta, 1 beta' and 1 omega subunit. When a sigma factor is associated with the core the holoenzyme is formed, which can initiate transcription. Requires Mg(2+) as cofactor. The cofactor is Zn(2+).

It carries out the reaction RNA(n) + a ribonucleoside 5'-triphosphate = RNA(n+1) + diphosphate. Functionally, DNA-dependent RNA polymerase catalyzes the transcription of DNA into RNA using the four ribonucleoside triphosphates as substrates. In Paraburkholderia xenovorans (strain LB400), this protein is DNA-directed RNA polymerase subunit beta'.